The chain runs to 675 residues: Putative methyl-accepting chemotaxis AlkN (675 aa).

2 helical membrane-spanning segments follow: residues 24–44 (IALY…FLLS) and 303–323 (FPSV…FFII). Residues 343–394 (QRNQAAILRLLDELGDLADGDLTVQATVTEDFTGAIADSINYSIDQLRNLVQ) form the HAMP domain. Positions 399 to 635 (SAVQVASAAQ…HISNTMNVIQ (237 aa)) constitute a Methyl-accepting transducer domain.

This sequence belongs to the methyl-accepting chemotaxis (MCP) protein family.

The protein localises to the membrane. It participates in hydrocarbon metabolism; alkane degradation. Functionally, chemotactic-signal transducers respond to changes in the concentration of attractants and repellents in the environment, transduce a signal from the outside to the inside of the cell, and facilitate sensory adaptation through the variation of the level of methylation. In Alcanivorax borkumensis (strain ATCC 700651 / DSM 11573 / NCIMB 13689 / SK2), this protein is Putative methyl-accepting chemotaxis AlkN.